The following is a 448-amino-acid chain: Homogentisate 1,2-dioxygenase (448 aa).

3 residues coordinate Fe cation: histidine 340, glutamate 346, and histidine 377.

This sequence belongs to the homogentisate dioxygenase family. It depends on Fe cation as a cofactor.

The catalysed reaction is homogentisate + O2 = 4-maleylacetoacetate + H(+). It participates in amino-acid degradation; L-phenylalanine degradation; acetoacetate and fumarate from L-phenylalanine: step 4/6. The chain is Homogentisate 1,2-dioxygenase (hmgA) from Emericella nidulans (strain FGSC A4 / ATCC 38163 / CBS 112.46 / NRRL 194 / M139) (Aspergillus nidulans).